The sequence spans 443 residues: Threonine/serine transporter TdcC (443 aa).

11 consecutive transmembrane segments (helical) span residues 24–44, 45–65, 95–115, 140–160, 163–183, 207–227, 259–279, 319–339, 363–383, 385–405, and 423–443; these read WVLG…PISA, GIGG…IAFF, VGGV…LWIY, VVAL…KDLM, VMGY…LSLI, ILVT…FSPI, ASVL…FTLS, ASII…LGTL, LNMI…YINP, ILDL…CLLP, and SNYF…YQLM.

It belongs to the amino acid/polyamine transporter 2 family. SdaC/TdcC subfamily.

The protein localises to the cell inner membrane. It carries out the reaction L-threonine(in) + H(+)(in) = L-threonine(out) + H(+)(out). It catalyses the reaction L-serine(in) + H(+)(in) = L-serine(out) + H(+)(out). In terms of biological role, involved in the import of threonine and serine into the cell, with the concomitant import of a proton (symport system). In Edwardsiella piscicida, this protein is Threonine/serine transporter TdcC.